The chain runs to 853 residues: G-type lectin S-receptor-like serine/threonine-protein kinase SRK (853 aa).

An N-terminal signal peptide occupies residues 1–31 (MRGELPNKHHSYTFFVFLFFFLILFPDLSIS). Topologically, residues 32-441 (VNTLSATESL…FGERRTIRGK (410 aa)) are extracellular. The region spanning 34–154 (TLSATESLTI…KINESDEFLW (121 aa)) is the Bulb-type lectin domain. Residues Asn-46, Asn-120, Asn-147, and Asn-243 are each glycosylated (N-linked (GlcNAc...) asparagine). The EGF-like; atypical domain occupies 293-329 (PKDTCDLYGICGPYAYCDMSTSPTCNCIKGFQPLSPQ). Intrachain disulfides connect Cys-297-Cys-309, Cys-303-Cys-317, Cys-378-Cys-403, and Cys-382-Cys-388. A PAN domain is found at 348–428 (CGEDRFFRLM…DGQDLFVRLA (81 aa)). Asn-387 carries N-linked (GlcNAc...) asparagine glycosylation. A helical transmembrane segment spans residues 442–462 (IIGLIIGISLMLVLSFIIYCF). Over 463–853 (WKKKQKRARA…QITVSVINAR (391 aa)) the chain is Cytoplasmic. The 279-residue stretch at 524–802 (FSDSNILGRG…PKMSSVVLML (279 aa)) folds into the Protein kinase domain. Residues 530–538 (LGRGGFGIV) and Lys-552 each bind ATP. Ser-558 bears the Phosphoserine mark. The interval 613–631 (TQSSNKLNWQTRFSIINGI) is caM-binding. Asp-650 acts as the Proton acceptor in catalysis. Phosphoserine occurs at positions 654 and 667. Residue Thr-684 is modified to Phosphothreonine. Positions 807 to 838 (GEIPQPKRPGYCVGRSSLDTADSSSSTKRDSE) are disordered. Over residues 822 to 832 (SSLDTADSSSS) the composition is skewed to low complexity. A Phosphoserine modification is found at Ser-831.

Belongs to the protein kinase superfamily. Ser/Thr protein kinase family.

The protein resides in the cell membrane. The catalysed reaction is L-seryl-[protein] + ATP = O-phospho-L-seryl-[protein] + ADP + H(+). It catalyses the reaction L-threonyl-[protein] + ATP = O-phospho-L-threonyl-[protein] + ADP + H(+). Female specificity determinant of self-incompatibility. This Arabidopsis thaliana (Mouse-ear cress) protein is G-type lectin S-receptor-like serine/threonine-protein kinase SRK (SRK).